Reading from the N-terminus, the 41-residue chain is MLNLIVVVLPILAAVTWVVFNIQKPAREQLARQFDENNKAF.

Residues 4-22 traverse the membrane as a helical segment; sequence LIVVVLPILAAVTWVVFNI.

Belongs to the PsbY family. As to quaternary structure, PSII is composed of 1 copy each of membrane proteins PsbA, PsbB, PsbC, PsbD, PsbE, PsbF, PsbH, PsbI, PsbJ, PsbK, PsbL, PsbM, PsbT, PsbX, PsbY, Psb30/Ycf12, peripheral proteins PsbO, CyanoQ (PsbQ), PsbU, PsbV and a large number of cofactors. It forms dimeric complexes.

It localises to the cellular thylakoid membrane. Functionally, loosely associated component of the core of photosystem II (PSII), it is not always seen in crystals. PSII is a light-driven water plastoquinone oxidoreductase, using light energy to abstract electrons from H(2)O, generating a proton gradient subsequently used for ATP formation. This Prochlorococcus marinus (strain MIT 9211) protein is Photosystem II reaction center protein Y.